The following is a 229-amino-acid chain: Ras-related protein Rab-33B (229 aa).

Positions 43, 44, 45, 46, 47, 48, 62, and 65 each coordinate GTP. Thr47 provides a ligand contact to Mg(2+). Residues 56–68 (GRFPDRTEATIGV) carry the Switch 1 motif. Mg(2+) contacts are provided by Thr65 and Asp88. The short motif at 89–108 (TAGQERFRKSMVQHYYRNVH) is the Switch 2 element. Gly91, Asn148, Lys149, Asp151, Ala179, and Lys180 together coordinate GTP. S-geranylgeranyl cysteine attachment occurs at residues Cys227 and Cys229. At Cys229 the chain carries Cysteine methyl ester.

Belongs to the small GTPase superfamily. Rab family. As to quaternary structure, interacts (GTP- and GDP-bound forms) with ATG16L1; the complex consists of a tetramer where two RAB33B molecules bind independently one molecule of the ATG16L1 homodimer; the interaction promotes ATG12-ATG5-ATG16L1 complex recruitment to phagophores. Interacts with ATG16L2; however interaction is approximately hundred times lower than for ATG16L1. Interacts with RIC1 (via C-terminus domain); the interaction is direct with a preference for RAB33B-GTP. Interacts with RGP1. Mg(2+) is required as a cofactor. Post-translationally, prenylated. Ubiquitous.

It is found in the golgi apparatus membrane. The protein localises to the golgi apparatus. It localises to the cis-Golgi network. Its subcellular location is the preautophagosomal structure membrane. The catalysed reaction is GTP + H2O = GDP + phosphate + H(+). With respect to regulation, regulated by guanine nucleotide exchange factors (GEFs) which promote the exchange of bound GDP for free GTP. Regulated by GTPase activating proteins (GAPs) such as SGSM2 which increase the GTP hydrolysis activity. Inhibited by GDP dissociation inhibitors (GDIs). Its function is as follows. The small GTPases Rab are key regulators of intracellular membrane trafficking, from the formation of transport vesicles to their fusion with membranes. Rabs cycle between an inactive GDP-bound form and an active GTP-bound form that is able to recruit to membranes different sets of downstream effectors directly responsible for vesicle formation, movement, tethering and fusion. RAB33B acts, in coordination with RAB6A, to regulate intra-Golgi retrograde trafficking. Participates in autophagosome formation by recruiting the ATG12-ATG5-ATG16L1 complex to phagophores, probably in a nucleotide-independent manner. This is Ras-related protein Rab-33B from Mus musculus (Mouse).